Reading from the N-terminus, the 406-residue chain is Testis-specific Y-encoded-like protein 4 (406 aa).

Disordered stretches follow at residues 1–63 (MNGV…EHCG), 81–121 (GLED…AKPK), 161–189 (EAGA…TRPR), and 387–406 (VRVP…FQSG). Positions 8-20 (NELSLANTTTPSH) are enriched in polar residues. Over residues 93-102 (DAPSAPVAAD) the composition is skewed to low complexity. A compositionally biased stretch (basic and acidic residues) spans 167–188 (QEKKGLQKEKKVAGGGKEETRP).

Belongs to the nucleosome assembly protein (NAP) family.

In Mus musculus (Mouse), this protein is Testis-specific Y-encoded-like protein 4 (Tspyl4).